A 98-amino-acid polypeptide reads, in one-letter code: NADH-ubiquinone oxidoreductase chain 4L (98 aa).

3 consecutive transmembrane segments (helical) span residues 2-22, 26-46, and 61-81; these read SPIY…TLLF, LMST…MVTS, and ITML…LVMI.

Belongs to the complex I subunit 4L family. In terms of assembly, core subunit of respiratory chain NADH dehydrogenase (Complex I) which is composed of 45 different subunits.

The protein localises to the mitochondrion inner membrane. The catalysed reaction is a ubiquinone + NADH + 5 H(+)(in) = a ubiquinol + NAD(+) + 4 H(+)(out). Core subunit of the mitochondrial membrane respiratory chain NADH dehydrogenase (Complex I) which catalyzes electron transfer from NADH through the respiratory chain, using ubiquinone as an electron acceptor. Part of the enzyme membrane arm which is embedded in the lipid bilayer and involved in proton translocation. The polypeptide is NADH-ubiquinone oxidoreductase chain 4L (MT-ND4L) (Nephelomys albigularis (Tomes's rice rat)).